Reading from the N-terminus, the 229-residue chain is Echinolectin 1 (229 aa).

N94 carries N-linked (GlcNAc...) asparagine glycosylation.

The protein resides in the secreted. The polypeptide is Echinolectin 1 (Echinometra lucunter (Rock-boring urchin)).